Reading from the N-terminus, the 884-residue chain is Endoribonuclease ysh1 (884 aa).

The Zn(2+) site is built by His83, His85, Asp87, His88, His174, and Asp195. The active-site Proton donor is His446. Position 468 (His468) interacts with Zn(2+). Disordered regions lie at residues 595–626, 678–705, and 734–780; these read EIGT…EEIP, PASV…LKFL, and PIER…QDPD. Residues 605–619 are compositionally biased toward basic and acidic residues; sequence EDQQSESEEKQRMKE. The span at 684–695 shows a compositional bias: basic residues; sequence SAKHNKHHHHHH. The span at 742–758 shows a compositional bias: low complexity; it reads SSTESATTTTNGNGNSK. Over residues 762–780 the composition is skewed to polar residues; that stretch reads EQLSSLESKTDGATPQDPD.

Belongs to the metallo-beta-lactamase superfamily. RNA-metabolizing metallo-beta-lactamase-like family. CPSF2/YSH1 subfamily.

It localises to the nucleus. Component of the cleavage factor I (CF I) involved in pre-mRNA 3'-end processing. The protein is Endoribonuclease ysh1 (ysh1) of Emericella nidulans (strain FGSC A4 / ATCC 38163 / CBS 112.46 / NRRL 194 / M139) (Aspergillus nidulans).